A 342-amino-acid chain; its full sequence is Anthranilate phosphoribosyltransferase (342 aa).

5-phospho-alpha-D-ribose 1-diphosphate-binding positions include glycine 83, glycine 86–aspartate 87, threonine 91, asparagine 93–threonine 96, lysine 111–serine 119, and serine 123. Glycine 83 provides a ligand contact to anthranilate. Serine 95 is a Mg(2+) binding site. Arginine 169 lines the anthranilate pocket. Positions 228 and 229 each coordinate Mg(2+).

This sequence belongs to the anthranilate phosphoribosyltransferase family. As to quaternary structure, homodimer. It depends on Mg(2+) as a cofactor.

It catalyses the reaction N-(5-phospho-beta-D-ribosyl)anthranilate + diphosphate = 5-phospho-alpha-D-ribose 1-diphosphate + anthranilate. The protein operates within amino-acid biosynthesis; L-tryptophan biosynthesis; L-tryptophan from chorismate: step 2/5. Catalyzes the transfer of the phosphoribosyl group of 5-phosphorylribose-1-pyrophosphate (PRPP) to anthranilate to yield N-(5'-phosphoribosyl)-anthranilate (PRA). The protein is Anthranilate phosphoribosyltransferase of Laribacter hongkongensis (strain HLHK9).